A 2212-amino-acid chain; its full sequence is RNA-directed RNA polymerase L (2212 aa).

Positions 30–288 are endonuclease; that stretch reads KDALLSQVHP…SHEENDSLDC (259 aa). Positions 55, 93, and 106 each coordinate Mn(2+). Lysine 119 is a catalytic residue. The disordered stretch occupies residues 922 to 942; the sequence is MKSSDAREERLQDPKRNEKNA. The segment covering 923–942 has biased composition (basic and acidic residues); the sequence is KSSDAREERLQDPKRNEKNA. Residues 1175-1371 enclose the RdRp catalytic domain; sequence CDMKMAVNNG…YLSSKLNKFV (197 aa). Position 1333 (aspartate 1333) interacts with Mg(2+).

The protein belongs to the Bunyavirales RNA polymerase family. As to quaternary structure, homomultimer; the oligomeric structure is essential for the polymerase activity. Interacts with nucleoprotein N. Interacts with protein Z; this interaction inhibits viral transcription and replication, Z partially blocks the product exit tunnel for the releasing nascent RNA product. Mn(2+) serves as cofactor. Requires Mg(2+) as cofactor.

The protein resides in the virion. Its subcellular location is the host cytoplasm. It catalyses the reaction RNA(n) + a ribonucleoside 5'-triphosphate = RNA(n+1) + diphosphate. Its function is as follows. RNA-dependent RNA polymerase, which is responsible for the replication and transcription of the viral RNA genome using antigenomic RNA as an intermediate. During transcription, synthesizes subgenomic RNAs and assures their capping by a cap-snatching mechanism, which involves the endonuclease activity cleaving the host capped pre-mRNAs. These short capped RNAs are then used as primers for viral transcription. The 3'-end of subgenomic mRNAs molecules are heterogeneous and not polyadenylated. The replicase function is to direct synthesis of antigenomic and genomic RNA which are encapsidated and non capped. As a consequence of the use of the same enzyme for both transcription and replication, these mechanisms need to be well coordinated. These processes may be regulated by proteins N and Z in a dose-dependent manner. Z protein inhibits the viral polymerase L und thus the viral transcription and RNA synthesis. This Sabia mammarenavirus (isolate Human/Brasil/SPH114202/1990) (SABV) protein is RNA-directed RNA polymerase L.